Here is a 352-residue protein sequence, read N- to C-terminus: MTQISERLLVQAHLDAKQPNPLTAEQEAEYRAAIAAELKAQNAVLVAHYYCDPVIQALAEETGGCVSDSLEMARFGKNHPAETVIVAGVRFMGETAKILTPEKRVLMPTLEATCSLDLGCPVEEFSAFCDQHPERTVVVYANTSAAVKARADWVVTSSCALEIVESLMDNGETIIWGPDQHLGRYIQKQTGADMLLWDGACIVHEEFKSRQLADMKALYPDAAILVHPESPEAVIELADAVGSTSQLIKAAQTLPNKTFIVATDRGIFYKMQQLCPDKEFVEAPTAGNGAACRSCAHCPWMAMNTLERVLDCLRNGTNEIFVDPALVPKAIKPLNRMLDFTQAARLKLSGNA.

Iminosuccinate-binding residues include histidine 48 and serine 69. Cysteine 114 lines the [4Fe-4S] cluster pocket. Iminosuccinate contacts are provided by residues 140-142 (YAN) and serine 157. Residue cysteine 201 participates in [4Fe-4S] cluster binding. Iminosuccinate contacts are provided by residues 227–229 (HPE) and threonine 244. Position 298 (cysteine 298) interacts with [4Fe-4S] cluster.

The protein belongs to the quinolinate synthase family. Type 1 subfamily. The cofactor is [4Fe-4S] cluster.

It localises to the cytoplasm. It carries out the reaction iminosuccinate + dihydroxyacetone phosphate = quinolinate + phosphate + 2 H2O + H(+). Its pathway is cofactor biosynthesis; NAD(+) biosynthesis; quinolinate from iminoaspartate: step 1/1. Functionally, catalyzes the condensation of iminoaspartate with dihydroxyacetone phosphate to form quinolinate. The sequence is that of Quinolinate synthase from Pseudomonas putida (strain ATCC 700007 / DSM 6899 / JCM 31910 / BCRC 17059 / LMG 24140 / F1).